Here is a 200-residue protein sequence, read N- to C-terminus: MTRISHITRNTKETQIELSINLDGTGQADISTGIGFLDHMLTLLTFHSDFDLKIIGHGDHETVGMDPHHLIEDVAIALGKCISEALGNKLGIRRYGSFTIPMDEALVTCDLDISGRPYLVFHADLSGNQKLGGYDTEMTEEFFRALAFNAGITLHLNEHYGQNTHHIIEGMFKSTARALKQAVSIDESKVGEIPSSKGVL.

Substrate contacts are provided by residues Glu13, 39–47, 68–72, Arg94, and Arg116; these read HMLTLLTFH and HHLIE. Mn(2+)-binding residues include His39, His68, His69, and Glu72. Residues Glu141, His165, His166, and Glu169 each coordinate Mn(2+). Residues 165–173 and 195–197 each bind substrate; these read HHIIEGMFK and SSK.

This sequence belongs to the imidazoleglycerol-phosphate dehydratase family. The cofactor is Mn(2+).

Its subcellular location is the cytoplasm. It carries out the reaction D-erythro-1-(imidazol-4-yl)glycerol 3-phosphate = 3-(imidazol-4-yl)-2-oxopropyl phosphate + H2O. Its pathway is amino-acid biosynthesis; L-histidine biosynthesis; L-histidine from 5-phospho-alpha-D-ribose 1-diphosphate: step 6/9. The chain is Imidazoleglycerol-phosphate dehydratase (hisB) from Lactococcus lactis subsp. lactis (strain IL1403) (Streptococcus lactis).